The sequence spans 510 residues: NAD(P)H-quinone oxidoreductase subunit 2 A, chloroplastic (510 aa).

The next 13 membrane-spanning stretches (helical) occupy residues 24 to 44 (LLLF…GLIL), 57 to 77 (IPWL…ALLF), 99 to 119 (IFQF…VEYI), 124 to 144 (MAIT…MFLC), 149 to 169 (LITI…LSGY), 183 to 203 (YLLM…WLYG), 227 to 247 (PGIS…LSPA), 295 to 315 (WHLL…LIAI), 323 to 343 (MLAY…IVGD), 354 to 374 (YMLF…LFGL), 395 to 415 (ALSL…AGFF), 418 to 438 (LYLF…IGLL), and 484 to 504 (MIVC…IIAI).

This sequence belongs to the complex I subunit 2 family. As to quaternary structure, NDH is composed of at least 16 different subunits, 5 of which are encoded in the nucleus.

It localises to the plastid. The protein resides in the chloroplast thylakoid membrane. It carries out the reaction a plastoquinone + NADH + (n+1) H(+)(in) = a plastoquinol + NAD(+) + n H(+)(out). It catalyses the reaction a plastoquinone + NADPH + (n+1) H(+)(in) = a plastoquinol + NADP(+) + n H(+)(out). Its function is as follows. NDH shuttles electrons from NAD(P)H:plastoquinone, via FMN and iron-sulfur (Fe-S) centers, to quinones in the photosynthetic chain and possibly in a chloroplast respiratory chain. The immediate electron acceptor for the enzyme in this species is believed to be plastoquinone. Couples the redox reaction to proton translocation, and thus conserves the redox energy in a proton gradient. This Solanum lycopersicum (Tomato) protein is NAD(P)H-quinone oxidoreductase subunit 2 A, chloroplastic.